Reading from the N-terminus, the 202-residue chain is Small ribosomal subunit protein uS5 (202 aa).

Positions 1-13 are enriched in gly residues; sequence MPGQQRRGGGSGG. The interval 1–31 is disordered; that stretch reads MPGQQRRGGGSGGSDRRERRDRSGGGPAQEK. Positions 14-23 are enriched in basic and acidic residues; sequence SDRRERRDRS. The S5 DRBM domain maps to 34 to 97; the sequence is YVERVVAINR…EEAKKHFFKV (64 aa).

Belongs to the universal ribosomal protein uS5 family. In terms of assembly, part of the 30S ribosomal subunit. Contacts proteins S4 and S8.

With S4 and S12 plays an important role in translational accuracy. Functionally, located at the back of the 30S subunit body where it stabilizes the conformation of the head with respect to the body. The polypeptide is Small ribosomal subunit protein uS5 (Parafrankia sp. (strain EAN1pec)).